The sequence spans 321 residues: Small ribosomal subunit biogenesis GTPase RsgA (321 aa).

The CP-type G domain occupies 89 to 248 (QSWINRPPVA…VADTPGFNRP (160 aa)). GTP is bound by residues 138-141 (TKRD) and 190-198 (GPSGVGKTS). Zn(2+)-binding residues include cysteine 273, cysteine 278, histidine 280, and cysteine 286.

It belongs to the TRAFAC class YlqF/YawG GTPase family. RsgA subfamily. In terms of assembly, monomer. Associates with 30S ribosomal subunit, binds 16S rRNA. The cofactor is Zn(2+).

It is found in the cytoplasm. Its function is as follows. One of several proteins that assist in the late maturation steps of the functional core of the 30S ribosomal subunit. Helps release RbfA from mature subunits. May play a role in the assembly of ribosomal proteins into the subunit. Circularly permuted GTPase that catalyzes slow GTP hydrolysis, GTPase activity is stimulated by the 30S ribosomal subunit. The chain is Small ribosomal subunit biogenesis GTPase RsgA from Prochlorococcus marinus (strain MIT 9313).